Consider the following 347-residue polypeptide: FMRFamide-related peptides (347 aa).

An N-terminal signal peptide occupies residues 1–22 (MGIALMFLLALYQMQSAIHSEI). A propeptide spanning residues 23 to 102 (IDTPNYAGNS…RYKYDPELEA (80 aa)) is cleaved from the precursor. At F114 the chain carries Phenylalanine amide. At Y146 the chain carries Tyrosine amide. A phenylalanine amide mark is found at F157, F168, F179, F190, F201, F212, F223, and F232. The propeptide occupies 235–240 (SPHEEL). Phenylalanine amide occurs at positions 250 and 259. Position 270 is a serine amide (S270). F280 bears the Phenylalanine amide mark. A propeptide spanning residues 283–347 (SLKPAAPESK…SVEQDQFFGQ (65 aa)) is cleaved from the precursor. The tract at residues 283-347 (SLKPAAPESK…SVEQDQFFGQ (65 aa)) is disordered. The segment covering 305 to 320 (SPVDKAMTELFKKQEL) has biased composition (basic and acidic residues). Over residues 321–347 (QDQQVKNGAQATTTQDGSVEQDQFFGQ) the composition is skewed to polar residues.

The protein belongs to the FARP (FMRFamide related peptide) family. This precursor includes 13 peptides that have FMRF or related sequences at their C-termini, and other putative neuropeptides.

Its subcellular location is the secreted. Functionally, in insects, FMRFamide and related peptides have modulatory actions at skeletal neuromuscular junctions, and peptides that are immunologically related to FMRFamide are released into the circulation from neurohemal organs. The polypeptide is FMRFamide-related peptides (Drosophila melanogaster (Fruit fly)).